The sequence spans 459 residues: NADH-ubiquinone oxidoreductase chain 4 (459 aa).

13 helical membrane-spanning segments follow: residues 22–42 (MIWINTTTHSLIISIIPLLFF), 60–80 (PLTTPLLMLTTWLLPLTIMAS), 94–112 (LYLSMLISLQISLIMTFTA), 113–133 (TELIMFYIFFEATLIPTLVII), 145–165 (AGTYFLFYTLVGSLPLLIALI), 196–216 (WLAYTMAFMVKMPLYGLHLWL), 224–244 (PIAGSMMLAAVLLKLGGYGMM), 257–277 (MAYPFLALSLWGMIMTSSISL), 284–303 (SLIAYSSISHMALVVAAILI), 308–330 (SFTGAVVLMIAHGLTSSLLFCLA), 351–371 (LLPLMALWWLLASLANLALPP), 391–411 (TTLLLTGSNMLITALYSLYMF), and 435–455 (ILMFMHLSPILLLSLNPDIIT).

Belongs to the complex I subunit 4 family. In terms of assembly, core subunit of respiratory chain NADH dehydrogenase (Complex I) which is composed of 45 different subunits.

Its subcellular location is the mitochondrion inner membrane. It catalyses the reaction a ubiquinone + NADH + 5 H(+)(in) = a ubiquinol + NAD(+) + 4 H(+)(out). Its function is as follows. Core subunit of the mitochondrial membrane respiratory chain NADH dehydrogenase (Complex I) which catalyzes electron transfer from NADH through the respiratory chain, using ubiquinone as an electron acceptor. Essential for the catalytic activity and assembly of complex I. The sequence is that of NADH-ubiquinone oxidoreductase chain 4 (MT-ND4) from Gorilla gorilla gorilla (Western lowland gorilla).